Reading from the N-terminus, the 244-residue chain is Sepiapterin reductase (244 aa).

NADP(+) contacts are provided by residues Gly9–Gly15, Ser40–Thr42, Asp66–Ile67, and Asn93. Phe99 serves as a coordination point for substrate. Thr116 contacts NADP(+). The substrate site is built by Ser145 and Tyr158. NADP(+)-binding positions include Tyr158, Lys162, and Val191–Trp196. Substrate is bound at residue Trp196.

Belongs to the short-chain dehydrogenases/reductases (SDR) family. In terms of assembly, homodimer.

Its subcellular location is the cytoplasm. It catalyses the reaction L-threo-7,8-dihydrobiopterin + NADP(+) = L-sepiapterin + NADPH + H(+). The enzyme catalyses L-threo-tetrahydrobiopterin + 2 NADP(+) = 6-pyruvoyl-5,6,7,8-tetrahydropterin + 2 NADPH + 2 H(+). With respect to regulation, slightly inhibited by N-acetyldopamine but not by N-acetylserotonin or melatonin. Catalyzes the final reductions in tetra-hydrobiopterin biosynthesis to form 5,6,7,8-tetrahydrobiopterin. This is Sepiapterin reductase from Chlorobaculum tepidum (strain ATCC 49652 / DSM 12025 / NBRC 103806 / TLS) (Chlorobium tepidum).